The following is a 339-amino-acid chain: MDQPAWKNPRTALIVDGSDAARQRRIPNLASVDLNLLVELEALLQYRNITHAAQHVGRSQPAMSRALSRLRDMFNDDLLVRGSSGLVPTPQAEHLAQMLPSVLNAIRELVSCSSGLRDLRSKVTMAMPDHQSLVLLPYLLPRLGERVPHVDIVTEPLLDGALRRLEQGEIDFAIGQIGAAPPGYLRRGLYADRFTCLLRHDHPALEQEWSVGTFAALRHASIASDSNEGLGQVYDGLVRFGLPGPIVVSNVLTAAVVVAMTDLVLMIPNRVATRVATMLPLAIVDPPVELKPYEVALIWHQRCHHDLEHRVLRREIAAAARMGRLDVSQDQRARRQNDS.

In terms of domain architecture, HTH lysR-type spans 32 to 89 (VDLNLLVELEALLQYRNITHAAQHVGRSQPAMSRALSRLRDMFNDDLLVRGSSGLVPT). The segment at residues 49–68 (ITHAAQHVGRSQPAMSRALS) is a DNA-binding region (H-T-H motif).

Belongs to the LysR transcriptional regulatory family.

Acts in trans to stimulate nod gene expression. This Sinorhizobium fredii (strain NBRC 101917 / NGR234) protein is HTH-type transcriptional regulator SyrM 2 (syrM2).